Reading from the N-terminus, the 212-residue chain is V-type ATP synthase subunit E (212 aa).

Belongs to the V-ATPase E subunit family.

Its function is as follows. Produces ATP from ADP in the presence of a proton gradient across the membrane. The sequence is that of V-type ATP synthase subunit E from Nitrosococcus oceani (strain ATCC 19707 / BCRC 17464 / JCM 30415 / NCIMB 11848 / C-107).